Here is a 695-residue protein sequence, read N- to C-terminus: Spermidine/spermine N(1)-acetyltransferase-like protein 1 (695 aa).

3 stretches are compositionally biased toward polar residues: residues 1–39 (MNQS…QGSA), 52–68 (PSMS…NLPD), and 78–98 (DTWQ…SQLV). Disordered regions lie at residues 1–274 (MNQS…MNQM), 290–332 (DMKQ…PGMW), 344–375 (ASIS…NQSG), and 387–493 (RQSG…GLSQ). Low complexity predominate over residues 105 to 122 (SQPDPSQPGPSQSGPSQS). Polar residues-rich tracts occupy residues 123 to 179 (RMRQ…TGLS), 197 to 208 (GVQQPGISQQVP), 231 to 266 (PDTS…QPSP), 294 to 310 (PSMS…NLPD), 355 to 375 (APSQ…NQSG), 389 to 422 (SGGS…TGLS), and 459 to 471 (PGTS…QTGM). The N-acetyltransferase domain occupies 529–695 (FQIRHAEAGD…EELLDMAWEE (167 aa)). Residue 552–553 (CE) coordinates substrate. Acetyl-CoA is bound by residues 618–620 (FYV) and 626–631 (GLGIGA). Substrate contacts are provided by residues 650–652 (HFL) and glutamate 676.

The protein belongs to the acetyltransferase family.

The polypeptide is Spermidine/spermine N(1)-acetyltransferase-like protein 1 (SATL1) (Homo sapiens (Human)).